Consider the following 110-residue polypeptide: MKFVLLFGVLLVTLFSYSSAEMLDDFDQADEDELLSLIEKEEARRDCIPKHHECTSNKHGCCRGHLFKYKCQCTTVVTQSGEETERCFCGTPPHHKAAELVVGFGKKIFG.

The N-terminal stretch at 1–20 (MKFVLLFGVLLVTLFSYSSA) is a signal peptide. A propeptide spanning residues 21-44 (EMLDDFDQADEDELLSLIEKEEAR) is cleaved from the precursor. 4 disulfides stabilise this stretch: cysteine 47–cysteine 62, cysteine 54–cysteine 71, cysteine 61–cysteine 89, and cysteine 73–cysteine 87.

It belongs to the neurotoxin 19 (CSTX) family. 03 subfamily. In terms of tissue distribution, expressed by the venom gland.

The protein localises to the secreted. In Lycosa singoriensis (Wolf spider), this protein is U1-lycotoxin-Ls1ee.